Reading from the N-terminus, the 139-residue chain is MNFKYIFAVSFLIASAYARSVQNDEQSLSQRDVLEEESLREIRGIGGVLLSAGKAALKGLAKVLAEKYANGKRTAEEHEVMKRLEAVMRDLDSLDHPEEASERETRGFNQDEIAKEKRILGPVLGLVGNALGGLIKKIG.

The signal sequence occupies residues 1 to 18; the sequence is MNFKYIFAVSFLIASAYA. Residues 19-43 constitute a propeptide that is removed on maturation; that stretch reads RSVQNDEQSLSQRDVLEEESLREIR. Asparagine amide is present on Asn-70. The propeptide occupies 74 to 118; that stretch reads TAEEHEVMKRLEAVMRDLDSLDHPEEASERETRGFNQDEIAKEKR. Ile-138 carries the isoleucine amide modification.

The protein belongs to the bombinin family. In terms of tissue distribution, expressed by the skin glands.

It localises to the secreted. In terms of biological role, maximin-4 shows antibacterial activity against both Gram-positive and Gram-negative bacteria. It also shows antimicrobial activity against the fungus C.albicans, but not against A.flavus nor P.uticale. It has little hemolytic activity. It does not possess a significant cytotoxicity against tumor cell lines. It does not possess a significant anti-HIV activity. Maximin-H3 shows antibacterial activity against both Gram-positive and Gram-negative bacteria. It also shows antimicrobial activity against the fungus C.albicans. Shows strong hemolytic activity. This Bombina maxima (Giant fire-bellied toad) protein is Maximins 4/H3 type 5.